We begin with the raw amino-acid sequence, 474 residues long: Glutamate--tRNA ligase (474 aa).

The 'HIGH' region signature appears at 9 to 19 (PSPTGYLHVGG). Residues 240 to 244 (KLSKR) carry the 'KMSKS' region motif. Lys-243 contributes to the ATP binding site.

This sequence belongs to the class-I aminoacyl-tRNA synthetase family. Glutamate--tRNA ligase type 1 subfamily. In terms of assembly, monomer.

Its subcellular location is the cytoplasm. It catalyses the reaction tRNA(Glu) + L-glutamate + ATP = L-glutamyl-tRNA(Glu) + AMP + diphosphate. Functionally, catalyzes the attachment of glutamate to tRNA(Glu) in a two-step reaction: glutamate is first activated by ATP to form Glu-AMP and then transferred to the acceptor end of tRNA(Glu). This is Glutamate--tRNA ligase from Aliivibrio salmonicida (strain LFI1238) (Vibrio salmonicida (strain LFI1238)).